The primary structure comprises 330 residues: Aspartate--ammonia ligase (330 aa).

It belongs to the class-II aminoacyl-tRNA synthetase family. AsnA subfamily.

It localises to the cytoplasm. It catalyses the reaction L-aspartate + NH4(+) + ATP = L-asparagine + AMP + diphosphate + H(+). It participates in amino-acid biosynthesis; L-asparagine biosynthesis; L-asparagine from L-aspartate (ammonia route): step 1/1. The polypeptide is Aspartate--ammonia ligase (Mannheimia succiniciproducens (strain KCTC 0769BP / MBEL55E)).